Reading from the N-terminus, the 292-residue chain is 4-diphosphocytidyl-2-C-methyl-D-erythritol kinase (292 aa).

Lys-20 is an active-site residue. 103 to 113 is a binding site for ATP; the sequence is PMGGGIGGGSS. Asp-145 is an active-site residue.

It belongs to the GHMP kinase family. IspE subfamily.

It carries out the reaction 4-CDP-2-C-methyl-D-erythritol + ATP = 4-CDP-2-C-methyl-D-erythritol 2-phosphate + ADP + H(+). Its pathway is isoprenoid biosynthesis; isopentenyl diphosphate biosynthesis via DXP pathway; isopentenyl diphosphate from 1-deoxy-D-xylulose 5-phosphate: step 3/6. In terms of biological role, catalyzes the phosphorylation of the position 2 hydroxy group of 4-diphosphocytidyl-2C-methyl-D-erythritol. In Cupriavidus metallidurans (strain ATCC 43123 / DSM 2839 / NBRC 102507 / CH34) (Ralstonia metallidurans), this protein is 4-diphosphocytidyl-2-C-methyl-D-erythritol kinase.